Reading from the N-terminus, the 378-residue chain is MAVVDVHRFAESITCHAWSPDLSMVALCPNNTEVHIYKSLSQDHWERLHVLQKHDQIVSGIDWSSKSNKIVTVSHDRNSYVWSLEGAEWVPTLVILRLNRAALCVQWSPKENKFAVGSGAKTVCICYYEQENNWWVSKLIRKRHESSVTSVAWHPNNVLLATTSTDGKCRVFSTFIKGVDTKDSKAGSPAETKFGEQILQLDLSYSWAFGVKWSPSGNTLAYVGHSSMIYFVDDVGPSPLAQSVAFRDLPLRDVLFISEKMVIGVGYDSNPMVFAADDTGIWSFIRYIGEKKAASSGSSYSSQFSEAFGKFYGSQSKSTTANDASDSRGGVHDNSITSIVPLGKGGSPKVMRFSTSGLDGKIAIWDLENMQQELGNQF.

7 WD repeats span residues 8–47 (RFAE…HWER), 53–92 (KHDQ…WVPT), 97–138 (RLNR…WVSK), 143–182 (RHES…VDTK), 203–242 (LSYS…PLAQ), 257–295 (ISEK…KAAS), and 331–375 (VHDN…QELG). The disordered stretch occupies residues 319 to 340 (TTANDASDSRGGVHDNSITSIV).

This sequence belongs to the WD repeat ARPC1 family. Component of the Arp2/3 complex composed of ARP2, ARP3, ARPC1/p41-ARC, ARPC2/p34-ARC, ARPC3/p21-ARC, ARPC4/p20-ARC and ARPC5/p16-ARC. As to expression, expressed at low levels in all tissues with a relatively highest expression in inflorescences.

The protein resides in the cytoplasm. It localises to the cytoskeleton. Functionally, functions as a component of the Arp2/3 complex which is involved in regulation of actin polymerization and together with an activating nucleation-promoting factor (NPF) mediates the formation of branched actin networks. Arp2/3 complex plays a critical role in the control of cell morphogenesis via the modulation of cell polarity development. The protein is Actin-related protein 2/3 complex subunit 1B (ARPC1B) of Arabidopsis thaliana (Mouse-ear cress).